Reading from the N-terminus, the 402-residue chain is mRNA-capping enzyme subunit alpha (402 aa).

The active-site N6-GMP-lysine intermediate is Lys67. Residues 374-402 (SVTKRKLDETSNDDAPAIKKVAKESEKEI) are disordered.

It belongs to the eukaryotic GTase family. In terms of assembly, heterodimer. The mRNA-capping enzyme is composed of two separate chains alpha and beta, respectively a mRNA guanylyltransferase and an mRNA 5'-triphosphate monophosphatase.

It is found in the nucleus. The catalysed reaction is a 5'-end diphospho-ribonucleoside in mRNA + GTP + H(+) = a 5'-end (5'-triphosphoguanosine)-ribonucleoside in mRNA + diphosphate. Second step of mRNA capping. Transfer of the GMP moiety of GTP to the 5'-end of RNA via an enzyme-GMP covalent reaction intermediate. In Schizosaccharomyces pombe (strain 972 / ATCC 24843) (Fission yeast), this protein is mRNA-capping enzyme subunit alpha (ceg1).